The following is a 492-amino-acid chain: Solute carrier family 2, facilitated glucose transporter member 1 (492 aa).

Position 1 is an N-acetylmethionine (Met-1). The Cytoplasmic portion of the chain corresponds to 1–11 (MEPSSKKLTGR). The helical transmembrane segment at 12-33 (LMLAVGGAVLGSLQFGYNTGVI) threads the bilayer. Residues 34–66 (NAPQKVIEEFYNQTWVHRYGESILPTTLTTLWS) are Extracellular-facing. Asn-45 is a glycosylation site (N-linked (GlcNAc...) asparagine). The helical transmembrane segment at 67–87 (LSVAIFSVGGMIGSFSVGLFV) threads the bilayer. Residues 88-90 (NRF) lie on the Cytoplasmic side of the membrane. Residues 91–112 (GRRNSMLMMNLLAFVSAVLMGF) traverse the membrane as a helical segment. At 113–120 (SKLGKSFE) the chain is on the extracellular side. A helical transmembrane segment spans residues 121-144 (MLILGRFIIGVYCGLTTGFVPMYV). Thr-137 contacts cytochalasin B. Over 145–155 (GEVSPTALRGA) the chain is Cytoplasmic. A helical membrane pass occupies residues 156-176 (LGTLHQLGIVVGILIAQVFGL). Over 177–185 (DSIMGNKDL) the chain is Extracellular. Residues 186–206 (WPLLLSIIFIPALLQCIVLPF) traverse the membrane as a helical segment. Topologically, residues 207-271 (CPESPRFLLI…LFRSPAYRQP (65 aa)) are cytoplasmic. Ser-226 is modified (phosphoserine; by PKC/PRKCB). The chain crosses the membrane as a helical span at residues 272 to 293 (ILIAVVLQLSQQLSGINAVFYY). Gln-282 contributes to the cytochalasin B binding site. D-glucose is bound by residues 282-283 (QQ) and Asn-288. The Extracellular portion of the chain corresponds to 294 to 306 (STSIFEKAGVQQP). Residues 307–328 (VYATIGSGIVNTAFTVVSLFVV) traverse the membrane as a helical segment. D-glucose is bound at residue Asn-317. At 329 to 334 (ERAGRR) the chain is on the cytoplasmic side. Residues 335-355 (TLHLIGLAGMAGCAILMTIAL) traverse the membrane as a helical segment. At 356–365 (ALLEQLPWMS) the chain is on the extracellular side. Residues 366 to 388 (YLSIVAIFGFVAFFEVGPGPIPW) traverse the membrane as a helical segment. Glu-380 contacts D-glucose. Cytochalasin B is bound at residue Trp-388. Residues 389–401 (FIVAELFSQGPRP) lie on the Cytoplasmic side of the membrane. The chain crosses the membrane as a helical span at residues 402–422 (AAIAVAGFSNWTSNFIVGMCF). Cytochalasin B is bound at residue Asn-411. Residues 423–429 (QYVEQLC) are Extracellular-facing. The chain crosses the membrane as a helical span at residues 430–450 (GPYVFIIFTVLLVLFFIFTYF). Residues 451 to 492 (KVPETKGRTFDEIASGFRQGGASQSDKTPEELFHPLGADSQV) are Cytoplasmic-facing. The residue at position 465 (Ser-465) is a Phosphoserine. The segment at 468-492 (RQGGASQSDKTPEELFHPLGADSQV) is disordered. Thr-478 bears the Phosphothreonine mark. Ser-490 is modified (phosphoserine).

Belongs to the major facilitator superfamily. Sugar transporter (TC 2.A.1.1) family. Glucose transporter subfamily. As to quaternary structure, interacts with GIPC (via PDZ domain). Found in a complex with ADD2, DMTN and SLC2A1. Interacts (via C-terminus cytoplasmic region) with DMTN isoform 2. Interacts with SNX27; the interaction is required when endocytosed to prevent degradation in lysosomes and promote recycling to the plasma membrane. Interacts with STOM. Interacts with SGTA (via Gln-rich region). Interacts with isoform 1 of BSG. Post-translationally, phosphorylation at Ser-226 by PKC promotes glucose uptake by increasing cell membrane localization. Detected in erythrocytes (at protein level). Expressed at variable levels in many human tissues.

The protein resides in the cell membrane. Its subcellular location is the melanosome. It is found in the photoreceptor inner segment. It catalyses the reaction D-glucose(out) = D-glucose(in). It functions in the pathway carbohydrate degradation. The uptake of glucose is inhibited by cytochalasin B and Phe-amide core-scaffold inhibitors GLUT-i1 and GLUT-i2. These inhibitors bind in the central cavity of the inward-open state and overlap the glucose-binding site. Glucose uptake is increased in response to phorbol ester 12-O-tetradecanoylphorbol-13-acetate (TPA) treatment: TPA-induced glucose uptake requires phosphorylation at Ser-226. Interacts with SMIM43; the interaction may promote SLC2A1-mediated glucose transport to meet the energy needs of mesendoderm differentiation. Facilitative glucose transporter, which is responsible for constitutive or basal glucose uptake. Has a very broad substrate specificity; can transport a wide range of aldoses including both pentoses and hexoses. Most important energy carrier of the brain: present at the blood-brain barrier and assures the energy-independent, facilitative transport of glucose into the brain. In association with BSG and NXNL1, promotes retinal cone survival by increasing glucose uptake into photoreceptors. Required for mesendoderm differentiation. The sequence is that of Solute carrier family 2, facilitated glucose transporter member 1 from Homo sapiens (Human).